The chain runs to 287 residues: Elongation factor Ts (287 aa).

Positions 80–83 (TDFL) are involved in Mg(2+) ion dislocation from EF-Tu.

This sequence belongs to the EF-Ts family.

The protein localises to the cytoplasm. In terms of biological role, associates with the EF-Tu.GDP complex and induces the exchange of GDP to GTP. It remains bound to the aminoacyl-tRNA.EF-Tu.GTP complex up to the GTP hydrolysis stage on the ribosome. This chain is Elongation factor Ts, found in Ectopseudomonas mendocina (strain ymp) (Pseudomonas mendocina).